The following is a 438-amino-acid chain: Transmembrane protein 184C (438 aa).

Helical transmembrane passes span 17-37 (LAVV…VWEL), 48-68 (AWFI…WVIL), 86-106 (ILWM…YPSI), 176-196 (VLQY…CELL), 212-232 (YLVI…LLFY), 254-274 (VVFV…VGVI), and 287-307 (AVAT…AAIA). A disordered region spans residues 358–438 (PRKKFFPEDQ…EEPSEKPVAS (81 aa)). 2 stretches are compositionally biased toward low complexity: residues 374–390 (SLLS…ASSV) and 404–413 (TVTPQTTPTT). Residues 426-438 (GVREEPSEKPVAS) are compositionally biased toward basic and acidic residues.

The protein belongs to the TMEM184 family.

The protein localises to the membrane. Functionally, possible tumor suppressor which may play a role in cell growth. The protein is Transmembrane protein 184C (TMEM184C) of Bos taurus (Bovine).